The sequence spans 665 residues: GRB2-associated-binding protein 2 (665 aa).

At S2 the chain carries Phosphoserine. In terms of domain architecture, PH spans 8 to 119 (DVVCTGWLRK…WVQSICQICG (112 aa)). The disordered stretch occupies residues 131–183 (RNLSSASHGPRSSPAEFSSSQHLLRERKSSAPSHSSQPTLFTFEPPMTSHMQP). Phosphoserine occurs at positions 135, 142, 143, 149, 150, 160, 165, 211, 220, and 261. The span at 160–170 (SAPSHSSQPTL) shows a compositional bias: polar residues. The residue at position 262 (T262) is a Phosphothreonine. The residue at position 263 (Y263) is a Phosphotyrosine. T275 is subject to Phosphothreonine. Residues S278 and S282 each carry the phosphoserine modification. A Phosphothreonine modification is found at T284. Phosphotyrosine is present on Y290. T328 is modified (phosphothreonine). Disordered stretches follow at residues 340 to 442 (TSGD…ENYV) and 491 to 517 (PSRG…PTPL). The short motif at 348-355 (PPPRPPKP) is the SH3-binding element. Residue S365 is modified to Phosphoserine. Phosphothreonine is present on residues T382 and T388. S402 carries the post-translational modification Phosphoserine. The residue at position 405 (T405) is a Phosphothreonine. A compositionally biased stretch (low complexity) spans 412-423 (GSGESASWSAES). 2 positions are modified to phosphoserine: S420 and S423. Y441 carries the phosphotyrosine modification. An SH3-binding motif is present at residues 499–508 (PPPVNRNLKP). At S532 the chain carries Phosphoserine. Polar residues-rich tracts occupy residues 548-566 (SSSQ…STDS) and 578-600 (NPVS…STGS). Residues 548–631 (SSSQYCRPIS…SSVTSDEKVD (84 aa)) form a disordered region. S612 is modified (phosphoserine). Position 632 is a phosphotyrosine (Y632). Residues 646 to 659 (TMQEWTDVRQSSEP) are compositionally biased toward polar residues. Residues 646-665 (TMQEWTDVRQSSEPSKGAKL) are disordered.

The protein belongs to the GAB family. Part of a complex composed of EEIG1, TNFRSF11A/RANK, PLCG2, GAB2, TEC and BTK; complex formation increases in the presence of TNFSF11/RANKL. Interacts with HCK. Interacts with SHC1; may mediate interaction with receptors. Interacts with SYK. Interacts with PI-3 kinase. Interacts with GRB2 (via SH3 2 domain). Interacts (phosphorylated) with PTPN11. Interacts with TNFRSF11A (via cytoplasmic domain). Interacts (phosphorylated) with 14-3-3 family proteins SFN, YWHAB, YWHAE, YWHAG, YWHAH, YWHAQ and YWHAZ; prevents interaction with GRB2 and attenuates GAB2 signaling. Post-translationally, phosphorylated upon EGF stimulation. Phosphorylated on tyrosine residues by HCK upon IL6 signaling. Phosphorylated on tyrosine residue(s) by the thrombopoietin receptor (TPOR), stem cell factor receptor (SCFR), and T-cell and B-cell antigen receptors, gp130, IL-2R and IL-3R. Phosphorylated upon stimulation of TNFRSF11A/RANK by TNFSF11/RANKL. In terms of processing, dephosphorylated by PTPN11.

The protein resides in the cytoplasm. The protein localises to the cell membrane. It localises to the membrane raft. Functionally, adapter protein which acts downstream of several membrane receptors including cytokine, antigen, hormone, cell matrix and growth factor receptors to regulate multiple signaling pathways. Regulates osteoclast differentiation mediating the TNFRSF11A/RANK signaling. In allergic response, it plays a role in mast cells activation and degranulation through PI-3-kinase regulation. Also involved in the regulation of cell proliferation and hematopoiesis. The sequence is that of GRB2-associated-binding protein 2 (Gab2) from Rattus norvegicus (Rat).